Reading from the N-terminus, the 553-residue chain is Dihydroxy-acid dehydratase (553 aa).

Asp-78 lines the Mg(2+) pocket. A [2Fe-2S] cluster-binding site is contributed by Cys-119. Residues Asp-120 and Lys-121 each contribute to the Mg(2+) site. Position 121 is an N6-carboxylysine (Lys-121). Cys-193 is a binding site for [2Fe-2S] cluster. Residue Glu-441 participates in Mg(2+) binding. Ser-467 (proton acceptor) is an active-site residue.

This sequence belongs to the IlvD/Edd family. As to quaternary structure, homodimer. [2Fe-2S] cluster is required as a cofactor. Mg(2+) serves as cofactor.

The catalysed reaction is (2R)-2,3-dihydroxy-3-methylbutanoate = 3-methyl-2-oxobutanoate + H2O. It catalyses the reaction (2R,3R)-2,3-dihydroxy-3-methylpentanoate = (S)-3-methyl-2-oxopentanoate + H2O. It functions in the pathway amino-acid biosynthesis; L-isoleucine biosynthesis; L-isoleucine from 2-oxobutanoate: step 3/4. It participates in amino-acid biosynthesis; L-valine biosynthesis; L-valine from pyruvate: step 3/4. Functions in the biosynthesis of branched-chain amino acids. Catalyzes the dehydration of (2R,3R)-2,3-dihydroxy-3-methylpentanoate (2,3-dihydroxy-3-methylvalerate) into 2-oxo-3-methylpentanoate (2-oxo-3-methylvalerate) and of (2R)-2,3-dihydroxy-3-methylbutanoate (2,3-dihydroxyisovalerate) into 2-oxo-3-methylbutanoate (2-oxoisovalerate), the penultimate precursor to L-isoleucine and L-valine, respectively. In Pelobacter propionicus (strain DSM 2379 / NBRC 103807 / OttBd1), this protein is Dihydroxy-acid dehydratase.